We begin with the raw amino-acid sequence, 179 residues long: Endoribonuclease YbeY (179 aa).

His148, His152, and His158 together coordinate Zn(2+).

Belongs to the endoribonuclease YbeY family. Zn(2+) serves as cofactor.

The protein localises to the cytoplasm. Its function is as follows. Single strand-specific metallo-endoribonuclease involved in late-stage 70S ribosome quality control and in maturation of the 3' terminus of the 16S rRNA. This chain is Endoribonuclease YbeY, found in Prochlorococcus marinus (strain AS9601).